The following is a 304-amino-acid chain: Ribonuclease HII (304 aa).

The interval 1–53 (MIRDTKQPIKVPAKPASRSGGKAKTVKPKTVKPKAVKAADGKAASAKASTSKA) is disordered. The segment covering 24-35 (KTVKPKTVKPKA) has biased composition (basic residues). The segment covering 36-53 (VKAADGKAASAKASTSKA) has biased composition (low complexity). The 189-residue stretch at 96-284 (WPIAGCDEAG…VAAAWQKIEG (189 aa)) folds into the RNase H type-2 domain. The a divalent metal cation site is built by Asp102, Glu103, and Asp193.

This sequence belongs to the RNase HII family. Mn(2+) serves as cofactor. The cofactor is Mg(2+).

It is found in the cytoplasm. It catalyses the reaction Endonucleolytic cleavage to 5'-phosphomonoester.. Functionally, endonuclease that specifically degrades the RNA of RNA-DNA hybrids. The sequence is that of Ribonuclease HII from Rhodopseudomonas palustris (strain ATCC BAA-98 / CGA009).